The primary structure comprises 173 residues: Alpha-crystallin A chain (173 aa).

N-acetylmethionine is present on Met1. The tract at residues Met1–Glu63 is required for complex formation with BFSP1 and BFSP2. The residue at position 6 (Gln6) is a Deamidated glutamine; partial. Phosphoserine is present on Ser45. 2 positions are modified to deamidated glutamine; partial: Gln50 and Gln90. The sHSP domain occupies Leu52–Ser162. N6-acetyllysine is present on Lys99. A Zn(2+)-binding site is contributed by His100. Asn101 carries the post-translational modification Deamidated asparagine; partial. Zn(2+) contacts are provided by Glu102 and His107. Ser122 carries the phosphoserine modification. The residue at position 123 (Asn123) is a Deamidated asparagine; partial. A disulfide bond links Cys131 and Cys142. Gln147 is modified (deamidated glutamine; partial). A disordered region spans residues Gly149–Ser173. Basic and acidic residues predominate over residues Ser153–Pro167. A Zn(2+)-binding site is contributed by His154. The O-linked (GlcNAc) serine glycan is linked to Ser162.

Belongs to the small heat shock protein (HSP20) family. In terms of assembly, heteromer composed of three CRYAA and one CRYAB subunits. Inter-subunit bridging via zinc ions enhances stability, which is crucial as there is no protein turn over in the lens. Can also form homodimers and homotetramers (dimers of dimers) which serve as the building blocks of homooligomers. Within homooligomers, the zinc-binding motif is created from residues of 3 different molecules. His-100 and Glu-102 from one molecule are ligands of the zinc ion, and His-107 and His-154 residues from additional molecules complete the site with tetrahedral coordination geometry. Part of a complex required for lens intermediate filament formation composed of BFSP1, BFSP2 and CRYAA. In terms of processing, undergoes age-dependent proteolytical cleavage at the C-terminus.

Its subcellular location is the cytoplasm. It is found in the nucleus. Its function is as follows. Contributes to the transparency and refractive index of the lens. In its oxidized form (absence of intramolecular disulfide bond), acts as a chaperone, preventing aggregation of various proteins under a wide range of stress conditions. Required for the correct formation of lens intermediate filaments as part of a complex composed of BFSP1, BFSP2 and CRYAA. This chain is Alpha-crystallin A chain (CRYAA), found in Loxodonta africana (African elephant).